We begin with the raw amino-acid sequence, 108 residues long: X antigen family member 5 (108 aa).

The tract at residues 20 to 108 is disordered; it reads VGPMLEPSVP…PEGGEGKPQL (89 aa). 2 stretches are compositionally biased toward basic and acidic residues: residues 40–52 and 94–108; these read SQDH…REDD and EQFK…KPQL.

Belongs to the GAGE family.

The chain is X antigen family member 5 (XAGE5) from Homo sapiens (Human).